A 216-amino-acid chain; its full sequence is Cytidylate kinase (216 aa).

ATP is bound at residue 10–18 (GPAAAGKST).

Belongs to the cytidylate kinase family. Type 1 subfamily.

Its subcellular location is the cytoplasm. It carries out the reaction CMP + ATP = CDP + ADP. The enzyme catalyses dCMP + ATP = dCDP + ADP. The polypeptide is Cytidylate kinase (Macrococcus caseolyticus (strain JCSC5402) (Macrococcoides caseolyticum)).